Here is a 76-residue protein sequence, read N- to C-terminus: MIFHKDSRTIDLDYGHIIMGIERKSRGNYDLYILIKKEGKFEVDSIFTGDVMVVDRGSFVSTSRGFPMLLVEVPDR.

This is an uncharacterized protein from Thermoproteus tenax virus 1 (strain KRA1) (TTV1).